A 425-amino-acid polypeptide reads, in one-letter code: Glutamyl-tRNA reductase (425 aa).

Substrate is bound by residues 49-52 (TCNR), Ser107, 112-114 (EPQ), and Gln118. Cys50 acts as the Nucleophile in catalysis. 187-192 (GAGETI) is a binding site for NADP(+).

This sequence belongs to the glutamyl-tRNA reductase family. Homodimer.

It catalyses the reaction (S)-4-amino-5-oxopentanoate + tRNA(Glu) + NADP(+) = L-glutamyl-tRNA(Glu) + NADPH + H(+). It functions in the pathway porphyrin-containing compound metabolism; protoporphyrin-IX biosynthesis; 5-aminolevulinate from L-glutamyl-tRNA(Glu): step 1/2. Catalyzes the NADPH-dependent reduction of glutamyl-tRNA(Glu) to glutamate 1-semialdehyde (GSA). In Pseudomonas entomophila (strain L48), this protein is Glutamyl-tRNA reductase.